The chain runs to 555 residues: Dihydroxy-acid dehydratase (555 aa).

Asp-78 provides a ligand contact to Mg(2+). Position 119 (Cys-119) interacts with [2Fe-2S] cluster. Mg(2+) is bound by residues Asp-120 and Lys-121. N6-carboxylysine is present on Lys-121. Residue Cys-192 coordinates [2Fe-2S] cluster. Glu-444 is a Mg(2+) binding site. The Proton acceptor role is filled by Ser-470.

The protein belongs to the IlvD/Edd family. As to quaternary structure, homodimer. [2Fe-2S] cluster serves as cofactor. Requires Mg(2+) as cofactor.

It catalyses the reaction (2R)-2,3-dihydroxy-3-methylbutanoate = 3-methyl-2-oxobutanoate + H2O. It carries out the reaction (2R,3R)-2,3-dihydroxy-3-methylpentanoate = (S)-3-methyl-2-oxopentanoate + H2O. Its pathway is amino-acid biosynthesis; L-isoleucine biosynthesis; L-isoleucine from 2-oxobutanoate: step 3/4. The protein operates within amino-acid biosynthesis; L-valine biosynthesis; L-valine from pyruvate: step 3/4. Functionally, functions in the biosynthesis of branched-chain amino acids. Catalyzes the dehydration of (2R,3R)-2,3-dihydroxy-3-methylpentanoate (2,3-dihydroxy-3-methylvalerate) into 2-oxo-3-methylpentanoate (2-oxo-3-methylvalerate) and of (2R)-2,3-dihydroxy-3-methylbutanoate (2,3-dihydroxyisovalerate) into 2-oxo-3-methylbutanoate (2-oxoisovalerate), the penultimate precursor to L-isoleucine and L-valine, respectively. The sequence is that of Dihydroxy-acid dehydratase from Halalkalibacterium halodurans (strain ATCC BAA-125 / DSM 18197 / FERM 7344 / JCM 9153 / C-125) (Bacillus halodurans).